The primary structure comprises 301 residues: Probable 5-dehydro-4-deoxyglucarate dehydratase (301 aa).

This sequence belongs to the DapA family.

It catalyses the reaction 5-dehydro-4-deoxy-D-glucarate + H(+) = 2,5-dioxopentanoate + CO2 + H2O. It participates in carbohydrate acid metabolism; D-glucarate degradation; 2,5-dioxopentanoate from D-glucarate: step 2/2. This is Probable 5-dehydro-4-deoxyglucarate dehydratase from Cereibacter sphaeroides (strain ATCC 17023 / DSM 158 / JCM 6121 / CCUG 31486 / LMG 2827 / NBRC 12203 / NCIMB 8253 / ATH 2.4.1.) (Rhodobacter sphaeroides).